A 960-amino-acid polypeptide reads, in one-letter code: Collagenase ColA (960 aa).

The N-terminal stretch at 1–30 (MNKNLRFTQMMIGISTMALSFGSIQTQVSA) is a signal peptide. The propeptide occupies 31 to 92 (EETAPYNILQ…KRDEIQLKQS (62 aa)). The segment at 93-365 (YTLAELNKMP…AVEQMKTNYG (273 aa)) is activator domain. The segment at 93-764 (YTLAELNKMP…VFHGVATEEK (672 aa)) is S1 metalloprotease domain. Positions 375-644 (DLQKIREEGK…MQQLIDNQDK (270 aa)) are catalytic subdomain. Position 500 (histidine 500) interacts with Zn(2+). Glutamate 501 is a catalytic residue. Residues histidine 504 and glutamate 532 each contribute to the Zn(2+) site. The helper subdomain stretch occupies residues 652 to 764 (NDYLIQHAPK…VFHGVATEEK (113 aa)). Residues 768–849 (TTIVNMNGPY…ESKEQTKVTV (82 aa)) form the PKD domain. A compositionally biased stretch (basic and acidic residues) spans 836–845 (SRGKESKEQT). Residues 836–859 (SRGKESKEQTKVTVKQDPQTSESY) are disordered. Polar residues predominate over residues 846–857 (KVTVKQDPQTSE). The interval 852–960 (DPQTSESYEE…KNGEYSLLVK (109 aa)) is collagen-binding domain.

It belongs to the peptidase M9B family. Collagenase subfamily. Ca(2+) serves as cofactor. Zn(2+) is required as a cofactor.

The protein localises to the secreted. It carries out the reaction Digestion of native collagen in the triple helical region at Xaa-|-Gly bonds. With synthetic peptides, a preference is shown for Gly at P3 and P1', Pro and Ala at P2 and P2', and hydroxyproline, Ala or Arg at P3'.. Acts as a true collagenase, which is highly active and efficiently targets native tropocollagen. In vitro, can also cleave gelatin and the synthetic peptide FALGPA (furylacryloyl-Leu-Gly-Pro-Ala). May contribute to bacterial virulence in endophthalmitis or opportunistic infections via collagen degradation in the host extracellular matrix (ECM). This Bacillus cereus (strain ATCC 14579 / DSM 31 / CCUG 7414 / JCM 2152 / NBRC 15305 / NCIMB 9373 / NCTC 2599 / NRRL B-3711) protein is Collagenase ColA.